The primary structure comprises 161 residues: Cyclic pyranopterin monophosphate synthase (161 aa).

Substrate is bound by residues 78-80 and 116-117; these read MCH and ME. The active site involves Asp131.

Belongs to the MoaC family. As to quaternary structure, homohexamer; trimer of dimers.

It catalyses the reaction (8S)-3',8-cyclo-7,8-dihydroguanosine 5'-triphosphate = cyclic pyranopterin phosphate + diphosphate. The protein operates within cofactor biosynthesis; molybdopterin biosynthesis. Its function is as follows. Catalyzes the conversion of (8S)-3',8-cyclo-7,8-dihydroguanosine 5'-triphosphate to cyclic pyranopterin monophosphate (cPMP). This Nitratidesulfovibrio vulgaris (strain ATCC 29579 / DSM 644 / CCUG 34227 / NCIMB 8303 / VKM B-1760 / Hildenborough) (Desulfovibrio vulgaris) protein is Cyclic pyranopterin monophosphate synthase.